A 104-amino-acid polypeptide reads, in one-letter code: UPF0145 protein STH1265 (104 aa).

This sequence belongs to the UPF0145 family.

In Symbiobacterium thermophilum (strain DSM 24528 / JCM 14929 / IAM 14863 / T), this protein is UPF0145 protein STH1265.